Consider the following 166-residue polypeptide: Large ribosomal subunit protein uL10 (166 aa).

This sequence belongs to the universal ribosomal protein uL10 family. Part of the ribosomal stalk of the 50S ribosomal subunit. The N-terminus interacts with L11 and the large rRNA to form the base of the stalk. The C-terminus forms an elongated spine to which L12 dimers bind in a sequential fashion forming a multimeric L10(L12)X complex.

Its function is as follows. Forms part of the ribosomal stalk, playing a central role in the interaction of the ribosome with GTP-bound translation factors. This chain is Large ribosomal subunit protein uL10, found in Pseudomonas syringae pv. syringae (strain B728a).